A 260-amino-acid polypeptide reads, in one-letter code: Adenosylcobinamide-GDP ribazoletransferase (260 aa).

A run of 7 helical transmembrane segments spans residues 42 to 62 (PLAG…ANAI), 64 to 84 (LPPL…TGAL), 117 to 137 (FAAL…MAII), 144 to 164 (YALL…LAFW), 192 to 212 (GLGL…VALI), 214 to 234 (ALVL…AKIG), and 240 to 260 (TLGA…VMAL).

Belongs to the CobS family. It depends on Mg(2+) as a cofactor.

The protein localises to the cell inner membrane. The catalysed reaction is alpha-ribazole + adenosylcob(III)inamide-GDP = adenosylcob(III)alamin + GMP + H(+). The enzyme catalyses alpha-ribazole 5'-phosphate + adenosylcob(III)inamide-GDP = adenosylcob(III)alamin 5'-phosphate + GMP + H(+). It functions in the pathway cofactor biosynthesis; adenosylcobalamin biosynthesis; adenosylcobalamin from cob(II)yrinate a,c-diamide: step 7/7. Functionally, joins adenosylcobinamide-GDP and alpha-ribazole to generate adenosylcobalamin (Ado-cobalamin). Also synthesizes adenosylcobalamin 5'-phosphate from adenosylcobinamide-GDP and alpha-ribazole 5'-phosphate. This Brucella ovis (strain ATCC 25840 / 63/290 / NCTC 10512) protein is Adenosylcobinamide-GDP ribazoletransferase.